The sequence spans 316 residues: Protein lifeguard 2 (316 aa).

The tract at residues 1-49 (MTQGKLSVANKAPGTEGQQQANGEKKDAPAVPSAPPSYEEATSGEGLKA) is disordered. A run of 3 helical transmembrane segments spans residues 106–126 (VYTILLVQLLVTLAVVALFTF), 138–158 (PGWYWASYAVFFATYLTLACC), and 165–185 (FPWNLILLTIFTLSMAYLTGM). Asn-191 carries N-linked (GlcNAc...) asparagine glycosylation. Transmembrane regions (helical) follow at residues 194-214 (SVLLCLGITALVCLSVTIFSF), 225-245 (GVLFVLLMTLFFSGLLLAILL), 251-271 (PWLHAVYAVLGAGVFTLFLAF), and 290-310 (IFGALNIYLDIIYIFTFFLQL).

Belongs to the BI1 family. LFG subfamily. In terms of assembly, interacts with FAS/TNFRSF6 and BAX. As to expression, expressed at high levels on dendrites and to a lesser extent on the soma and axons of neurons in various regions of brain.

Its subcellular location is the cell membrane. It localises to the membrane raft. The protein localises to the postsynaptic cell membrane. Antiapoptotic protein which protects cells uniquely from Fas-induced apoptosis. Regulates Fas-mediated apoptosis in neurons by interfering with caspase-8 activation. Plays a role in cerebellar development by affecting cerebellar size, internal granular layer (IGL) thickness, and Purkinje cell (PC) development. The protein is Protein lifeguard 2 (Faim2) of Rattus norvegicus (Rat).